A 297-amino-acid chain; its full sequence is MSLSGLITALATPFRADGALDPDGWQRLLHLQLEGGVHGVVVAGSTGEAATLTDAEYDQLLASAVERIGGRIPVMAGTGLSGTAKTIEQTRRAAALGASHALVVTPPYVRPTQAGLIAHYRAVADQGGLPVVLYNVPGRTGCDMQPETVAELASHPNIVGIKEAVGDTGRVQALLALRSAQFAVLSGDDGTAARSIRAGIDGLISVGSNVLPGAYRRMCELAAAHDHEATESWDGRLQPFHEFCGVEPNPIPVKALLRRIGIGHDLRLPLLPLSAVHHPAADHLAGDIAALEALSSH.

Threonine 46 is a pyruvate binding site. The active-site Proton donor/acceptor is the tyrosine 134. Lysine 162 serves as the catalytic Schiff-base intermediate with substrate. Residue isoleucine 204 participates in pyruvate binding.

It belongs to the DapA family. In terms of assembly, homotetramer; dimer of dimers.

The protein localises to the cytoplasm. It carries out the reaction L-aspartate 4-semialdehyde + pyruvate = (2S,4S)-4-hydroxy-2,3,4,5-tetrahydrodipicolinate + H2O + H(+). The protein operates within amino-acid biosynthesis; L-lysine biosynthesis via DAP pathway; (S)-tetrahydrodipicolinate from L-aspartate: step 3/4. In terms of biological role, catalyzes the condensation of (S)-aspartate-beta-semialdehyde [(S)-ASA] and pyruvate to 4-hydroxy-tetrahydrodipicolinate (HTPA). This Stenotrophomonas maltophilia (strain R551-3) protein is 4-hydroxy-tetrahydrodipicolinate synthase.